The following is a 200-amino-acid chain: Probable molybdenum cofactor guanylyltransferase (200 aa).

GTP contacts are provided by residues 9–11 (LAG), lysine 21, aspartate 69, and aspartate 100. Mg(2+) is bound at residue aspartate 100.

It belongs to the MobA family. Mg(2+) is required as a cofactor.

Its subcellular location is the cytoplasm. It carries out the reaction Mo-molybdopterin + GTP + H(+) = Mo-molybdopterin guanine dinucleotide + diphosphate. Transfers a GMP moiety from GTP to Mo-molybdopterin (Mo-MPT) cofactor (Moco or molybdenum cofactor) to form Mo-molybdopterin guanine dinucleotide (Mo-MGD) cofactor. This is Probable molybdenum cofactor guanylyltransferase from Bacillus cereus (strain B4264).